We begin with the raw amino-acid sequence, 409 residues long: AT-rich interactive domain-containing protein 3C (409 aa).

Over residues 1–14 (MEALQRQQAARLAQ) the composition is skewed to low complexity. Residues 1 to 91 (MEALQRQQAA…SPSSQSPGIQ (91 aa)) form a disordered region. Pro residues predominate over residues 19 to 30 (LAPPRLPLPQPP). Acidic residues predominate over residues 49 to 70 (AEEEEGAEDEEGETPLAEEETA). An ARID domain is found at 110 to 202 (DPKRKEFLDD…YLYPYECETR (93 aa)). Disordered stretches follow at residues 233–274 (NLAG…PAHA), 306–333 (TREKLAPEEPPEKRAVLMGPVDSPRLGA), and 385–409 (PVPASLGPTNPPPLPSTGPPSSTLP). The segment covering 235-257 (AGPTPRGAPGPASSHGPAPTATP) has biased composition (low complexity). Positions 301–386 (LASEATREKL…GILFARRQPV (86 aa)) constitute an REKLES domain. A compositionally biased stretch (basic and acidic residues) spans 306-320 (TREKLAPEEPPEKRA). Over residues 393–402 (TNPPPLPSTG) the composition is skewed to pro residues.

Interacts (via REKLES DOMAIN) with NPM1; the interaction mediates ARID3C nuclear shuttling.

It localises to the nucleus. Its function is as follows. Transcription factor involved in monocyte-to-macrophage differentiation. Forms a complex with NPM1 to translocate to the nucleus, acting as a transcription factor that promotes the expression of the genes involved in macrophage differentiation, such as STAT3, STAT1 and JUNB. This is AT-rich interactive domain-containing protein 3C (Arid3c) from Mus musculus (Mouse).